We begin with the raw amino-acid sequence, 361 residues long: 3-dehydroquinate synthase (361 aa).

NAD(+) contacts are provided by residues 104-108 (GVIGD), 128-129 (TT), Lys-141, Lys-150, and 168-171 (FLRT). Zn(2+) contacts are provided by Glu-183, His-246, and His-263.

It belongs to the sugar phosphate cyclases superfamily. Dehydroquinate synthase family. Co(2+) is required as a cofactor. Zn(2+) serves as cofactor. The cofactor is NAD(+).

Its subcellular location is the cytoplasm. It carries out the reaction 7-phospho-2-dehydro-3-deoxy-D-arabino-heptonate = 3-dehydroquinate + phosphate. It participates in metabolic intermediate biosynthesis; chorismate biosynthesis; chorismate from D-erythrose 4-phosphate and phosphoenolpyruvate: step 2/7. Catalyzes the conversion of 3-deoxy-D-arabino-heptulosonate 7-phosphate (DAHP) to dehydroquinate (DHQ). In Opitutus terrae (strain DSM 11246 / JCM 15787 / PB90-1), this protein is 3-dehydroquinate synthase.